Reading from the N-terminus, the 296-residue chain is Glycine--tRNA ligase alpha subunit (296 aa).

This sequence belongs to the class-II aminoacyl-tRNA synthetase family. In terms of assembly, tetramer of two alpha and two beta subunits.

It is found in the cytoplasm. It catalyses the reaction tRNA(Gly) + glycine + ATP = glycyl-tRNA(Gly) + AMP + diphosphate. In Desulfitobacterium hafniense (strain DSM 10664 / DCB-2), this protein is Glycine--tRNA ligase alpha subunit.